The chain runs to 327 residues: Phenylalanine--tRNA ligase alpha subunit (327 aa).

Position 252 (Glu-252) interacts with Mg(2+).

The protein belongs to the class-II aminoacyl-tRNA synthetase family. Phe-tRNA synthetase alpha subunit type 1 subfamily. Tetramer of two alpha and two beta subunits. Mg(2+) serves as cofactor.

It localises to the cytoplasm. It catalyses the reaction tRNA(Phe) + L-phenylalanine + ATP = L-phenylalanyl-tRNA(Phe) + AMP + diphosphate + H(+). In Sodalis glossinidius (strain morsitans), this protein is Phenylalanine--tRNA ligase alpha subunit.